Here is a 273-residue protein sequence, read N- to C-terminus: Bis(5'-nucleosyl)-tetraphosphatase, symmetrical (273 aa).

It belongs to the Ap4A hydrolase family.

The catalysed reaction is P(1),P(4)-bis(5'-adenosyl) tetraphosphate + H2O = 2 ADP + 2 H(+). Hydrolyzes diadenosine 5',5'''-P1,P4-tetraphosphate to yield ADP. The polypeptide is Bis(5'-nucleosyl)-tetraphosphatase, symmetrical (Aliivibrio salmonicida (strain LFI1238) (Vibrio salmonicida (strain LFI1238))).